A 101-amino-acid polypeptide reads, in one-letter code: Urease subunit beta (101 aa).

The protein belongs to the urease beta subunit family. As to quaternary structure, heterotrimer of UreA (gamma), UreB (beta) and UreC (alpha) subunits. Three heterotrimers associate to form the active enzyme.

The protein resides in the cytoplasm. It catalyses the reaction urea + 2 H2O + H(+) = hydrogencarbonate + 2 NH4(+). Its pathway is nitrogen metabolism; urea degradation; CO(2) and NH(3) from urea (urease route): step 1/1. This Thermosynechococcus vestitus (strain NIES-2133 / IAM M-273 / BP-1) protein is Urease subunit beta.